A 407-amino-acid polypeptide reads, in one-letter code: O-methyltransferase verK (407 aa).

S-adenosyl-L-methionine contacts are provided by residues Glu263 and Gly295–Phe297. The active-site Proton acceptor is the His314.

This sequence belongs to the class I-like SAM-binding methyltransferase superfamily. Cation-independent O-methyltransferase family.

Its pathway is mycotoxin biosynthesis. Its function is as follows. O-methyltransferase; part of the gene cluster that mediates the biosynthesis of 11'-deoxyverticillin A, one of the dimeric epipolythiodioxopiperazines (ETPs) from the verticillin family that act as mycotoxins. 11'-deoxyverticillin A is required for normal conidiation. The nonribosomal peptide synthetase verP is speculated to be responsible for condensation of amino acids to form the carbon skeleton of verticillin, whereas the cluster-specific tailoring enzymes are involved in further modifications leading to the production of 11'-deoxyverticillin A. This Clonostachys rogersoniana protein is O-methyltransferase verK.